The primary structure comprises 149 residues: D-aminoacyl-tRNA deacylase (149 aa).

The short motif at Gly-137–Pro-138 is the Gly-cisPro motif, important for rejection of L-amino acids element.

This sequence belongs to the DTD family. Homodimer.

It localises to the cytoplasm. It catalyses the reaction glycyl-tRNA(Ala) + H2O = tRNA(Ala) + glycine + H(+). It carries out the reaction a D-aminoacyl-tRNA + H2O = a tRNA + a D-alpha-amino acid + H(+). An aminoacyl-tRNA editing enzyme that deacylates mischarged D-aminoacyl-tRNAs. Also deacylates mischarged glycyl-tRNA(Ala), protecting cells against glycine mischarging by AlaRS. Acts via tRNA-based rather than protein-based catalysis; rejects L-amino acids rather than detecting D-amino acids in the active site. By recycling D-aminoacyl-tRNA to D-amino acids and free tRNA molecules, this enzyme counteracts the toxicity associated with the formation of D-aminoacyl-tRNA entities in vivo and helps enforce protein L-homochirality. This chain is D-aminoacyl-tRNA deacylase, found in Clostridium botulinum (strain Alaska E43 / Type E3).